The sequence spans 363 residues: DNA replication and repair protein RecF (363 aa).

30 to 37 contacts ATP; sequence GPNGSGKT.

The protein belongs to the RecF family.

It localises to the cytoplasm. Functionally, the RecF protein is involved in DNA metabolism; it is required for DNA replication and normal SOS inducibility. RecF binds preferentially to single-stranded, linear DNA. It also seems to bind ATP. This Chlorobium limicola (strain DSM 245 / NBRC 103803 / 6330) protein is DNA replication and repair protein RecF.